Consider the following 99-residue polypeptide: MASAKPKKKNPRLASGRKRVRQDIKINAANTSLRSKYRTAVKNVEKAVLAGDKTKATEQFAKMQAVVDTVADKGIFHKNKAARDKSRLSAKVKALALAA.

Residues 1–20 are compositionally biased toward basic residues; the sequence is MASAKPKKKNPRLASGRKRV. Positions 1-21 are disordered; the sequence is MASAKPKKKNPRLASGRKRVR.

The protein belongs to the bacterial ribosomal protein bS20 family.

Binds directly to 16S ribosomal RNA. The protein is Small ribosomal subunit protein bS20 of Verminephrobacter eiseniae (strain EF01-2).